Consider the following 274-residue polypeptide: Putative hydro-lyase Veis_4744 (274 aa).

Belongs to the D-glutamate cyclase family.

The sequence is that of Putative hydro-lyase Veis_4744 from Verminephrobacter eiseniae (strain EF01-2).